Consider the following 370-residue polypeptide: Peptide chain release factor 1 (370 aa).

N5-methylglutamine is present on glutamine 237. Positions 286–296 are enriched in basic and acidic residues; that stretch reads ERQRSARDATR. The interval 286–310 is disordered; sequence ERQRSARDATRKSQVGTGDRSEKIR.

Belongs to the prokaryotic/mitochondrial release factor family. Post-translationally, methylated by PrmC. Methylation increases the termination efficiency of RF1.

The protein localises to the cytoplasm. Functionally, peptide chain release factor 1 directs the termination of translation in response to the peptide chain termination codons UAG and UAA. This chain is Peptide chain release factor 1, found in Anaeromyxobacter dehalogenans (strain 2CP-C).